A 447-amino-acid polypeptide reads, in one-letter code: Protein king tubby (447 aa).

Residues 54-84 (GSPQNPDQILSNNSSSITMNSSRNNSNNMRS) are disordered. A compositionally biased stretch (low complexity) spans 62 to 84 (ILSNNSSSITMNSSRNNSNNMRS). Residue serine 136 is modified to Phosphoserine. The segment covering 168–182 (EGAAMEGSNGAANGS) has biased composition (low complexity). The interval 168–191 (EGAAMEGSNGAANGSGSVGGSGES) is disordered.

Belongs to the TUB family.

It localises to the cytoplasm. Its subcellular location is the nucleus. It is found in the cell projection. The protein resides in the cilium membrane. The protein localises to the rhabdomere. The chain is Protein king tubby from Drosophila grimshawi (Hawaiian fruit fly).